A 638-amino-acid chain; its full sequence is MSSTDQGTNPADTDDLTPTTLSLAGDFPKATEEQWEREVEKVLNRGRPPEKQLTFAECLKRLTVHTVDGIDIVPMYRPKDAPKKLGYPGVAPFTRGTTVRNGDMDAWDVRALHEDPDEKFTRKAILEGLERGVTSLLLRVDPDAIAPEHLDEVLSDVLLEMTKVEVFSRYDQGAAAEALVSVYERSDKPAKDLALNLGLDPIAFAALQGTEPDLTVLGDWVRRLAKFSPDSRAVTIDANIYHNAGAGDVAELAWALATGAEYVRALVEQGFTATEAFDTINFRVTATHDQFLTIARLRALREAWARIGEVFGVDEDKRGARQNAITSWRDVTREDPYVNILRGSIATFSASVGGAESITTLPFTQALGLPEDDFPLRIARNTGIVLAEEVNIGRVNDPAGGSYYVESLTRSLADAAWKEFQEVEKLGGMSKAVMTEHVTKVLDACNAERAKRLANRKQPITAVSEFPMIGARSIETKPFPAAPARKGLAWHRDSEVFEQLMDRSTSVSERPKVFLACLGTRRDFGGREGFSSPVWHIAGIDTPQVEGGTTAEIVEAFKKSGAQVADLCSSAKVYAQQGLEVAKALKAAGAKALYLSGAFKEFGDDAAEAEKLIDGRLFMGMDVVDTLSSTLDILGVAK.

A compositionally biased stretch (polar residues) spans 1 to 11 (MSSTDQGTNPA). The segment at 1-34 (MSSTDQGTNPADTDDLTPTTLSLAGDFPKATEEQ) is disordered.

The protein belongs to the methylmalonyl-CoA mutase family. Heterodimer of an alpha and a beta chain. Adenosylcob(III)alamin is required as a cofactor.

It catalyses the reaction (R)-methylmalonyl-CoA = succinyl-CoA. Its pathway is metabolic intermediate metabolism; propanoyl-CoA degradation; succinyl-CoA from propanoyl-CoA: step 3/3. In terms of biological role, catalyzes the isomerization of succinyl-CoA to methylmalonyl-CoA during synthesis of propionate from tricarboxylic acid-cycle intermediates. In Propionibacterium freudenreichii subsp. shermanii, this protein is Methylmalonyl-CoA mutase small subunit (mutA).